The sequence spans 122 residues: MIQKETNLVVADNSGAKKVRCIHVFGGTGRRYASLGDQVIVSVKTAVPGGIVKKKDVCKAVVVRAVKESRRKDGSYIRFDENAVVILNAQGEPRGTRIFGPVARELRDKRYMKIVSLAPEVL.

It belongs to the universal ribosomal protein uL14 family. As to quaternary structure, part of the 50S ribosomal subunit. Forms a cluster with proteins L3 and L19. In the 70S ribosome, L14 and L19 interact and together make contacts with the 16S rRNA in bridges B5 and B8.

Binds to 23S rRNA. Forms part of two intersubunit bridges in the 70S ribosome. This Chlorobium chlorochromatii (strain CaD3) protein is Large ribosomal subunit protein uL14.